The sequence spans 820 residues: Cell division control protein 48 homolog C (820 aa).

2 disordered regions span residues 72–157 (RVKD…RFDL) and 169–188 (LNSS…VEVE). The segment covering 76-87 (EDEDDNIGDEEG) has biased composition (acidic residues). A coiled-coil region spans residues 85–122 (EEGSASQRKKQRRVDEKEEKLQRAEQSHLRKRNMERSV). The segment covering 97 to 119 (RVDEKEEKLQRAEQSHLRKRNME) has biased composition (basic and acidic residues). Residues 121–142 (SVSSSPSSSSSSEDSGDVSTSE) show a composition bias toward low complexity. Residues 274 to 281 (GPPGCGKT) and 569 to 576 (GPPGCGKT) each bind ATP.

This sequence belongs to the AAA ATPase family.

It localises to the nucleus. The protein resides in the cytoplasm. Its subcellular location is the cytoskeleton. The protein localises to the phragmoplast. Its function is as follows. Probably functions in cell division and growth processes. Interacts with certain SNAREs as part of specialized membrane fusion events where vesicles from the same organelle fuse (homotypic fusion). In Arabidopsis thaliana (Mouse-ear cress), this protein is Cell division control protein 48 homolog C (CDC48C).